Reading from the N-terminus, the 273-residue chain is NAD-dependent protein deacylase (273 aa).

In terms of domain architecture, Deacetylase sirtuin-type spans 20–272 (RERLRQRIFF…PEFVEKLLEG (253 aa)). 48–67 (GAGISAESGIRTFRAADGLW) contributes to the NAD(+) binding site. Residues Tyr-92 and Arg-95 each coordinate substrate. 129 to 132 (QNID) lines the NAD(+) pocket. Catalysis depends on His-147, which acts as the Proton acceptor. Cys-155 and Cys-174 together coordinate Zn(2+). Residues 214-216 (GTS), 240-242 (NLE), and Ala-258 each bind NAD(+).

It belongs to the sirtuin family. Class III subfamily. Requires Zn(2+) as cofactor.

It is found in the cytoplasm. The enzyme catalyses N(6)-acetyl-L-lysyl-[protein] + NAD(+) + H2O = 2''-O-acetyl-ADP-D-ribose + nicotinamide + L-lysyl-[protein]. It catalyses the reaction N(6)-succinyl-L-lysyl-[protein] + NAD(+) + H2O = 2''-O-succinyl-ADP-D-ribose + nicotinamide + L-lysyl-[protein]. It carries out the reaction N(6)-(2-hydroxyisobutanoyl)-L-lysyl-[protein] + NAD(+) + H2O = 2''-O-(2-hydroxyisobutanoyl)-ADP-D-ribose + nicotinamide + L-lysyl-[protein]. Functionally, NAD-dependent lysine deacetylase that specifically removes acetyl groups on target proteins. Also acts as a protein-lysine deacylase by mediating protein desuccinylation and de-2-hydroxyisobutyrylation. Modulates the activities of several proteins which are inactive in their acylated form. The protein is NAD-dependent protein deacylase of Shigella flexneri.